We begin with the raw amino-acid sequence, 253 residues long: Phosphate import ATP-binding protein PstB 1 (253 aa).

The 242-residue stretch at 7 to 248 (LQIRDLSVYY…PKRKETEDYI (242 aa)) folds into the ABC transporter domain. 39 to 46 (GPSGSGKS) contributes to the ATP binding site.

This sequence belongs to the ABC transporter superfamily. Phosphate importer (TC 3.A.1.7) family. In terms of assembly, the complex is composed of two ATP-binding proteins (PstB), two transmembrane proteins (PstC and PstA) and a solute-binding protein (PstS).

Its subcellular location is the cell membrane. The catalysed reaction is phosphate(out) + ATP + H2O = ADP + 2 phosphate(in) + H(+). Functionally, part of the ABC transporter complex PstSACB involved in phosphate import. Responsible for energy coupling to the transport system. The sequence is that of Phosphate import ATP-binding protein PstB 1 from Streptococcus pyogenes serotype M12 (strain MGAS9429).